The sequence spans 143 residues: Small ribosomal subunit protein uS9 (143 aa).

The residue at position 2 (S2) is an N-acetylserine. A disordered region spans residues M123–R143. Residues A134–R143 show a composition bias toward basic residues.

This sequence belongs to the universal ribosomal protein uS9 family.

This is Small ribosomal subunit protein uS9 (RPS16) from Maudiozyma exigua (Yeast).